The sequence spans 309 residues: 2-dehydro-3-deoxygluconokinase (309 aa).

Residues 28–32 (GDTLN), tyrosine 88, 102–104 (YWR), and arginine 170 contribute to the substrate site. ATP-binding positions include 168-170 (NYR), 228-233 (KRGADS), and 261-264 (AAGD). Substrate is bound at residue aspartate 264. The Proton acceptor role is filled by aspartate 264.

The protein belongs to the carbohydrate kinase pfkB family.

It carries out the reaction 2-dehydro-3-deoxy-D-gluconate + ATP = 2-dehydro-3-deoxy-6-phospho-D-gluconate + ADP + H(+). It participates in carbohydrate acid metabolism; 2-dehydro-3-deoxy-D-gluconate degradation; D-glyceraldehyde 3-phosphate and pyruvate from 2-dehydro-3-deoxy-D-gluconate: step 1/2. Functionally, catalyzes the phosphorylation of 2-keto-3-deoxygluconate (KDG) to produce 2-keto-3-deoxy-6-phosphogluconate (KDPG). This chain is 2-dehydro-3-deoxygluconokinase (kdgK), found in Escherichia coli (strain ATCC 9637 / CCM 2024 / DSM 1116 / LMG 11080 / NBRC 13500 / NCIMB 8666 / NRRL B-766 / W).